Consider the following 141-residue polypeptide: ATP synthase epsilon chain (141 aa).

The protein belongs to the ATPase epsilon chain family. As to quaternary structure, F-type ATPases have 2 components, CF(1) - the catalytic core - and CF(0) - the membrane proton channel. CF(1) has five subunits: alpha(3), beta(3), gamma(1), delta(1), epsilon(1). CF(0) has three main subunits: a, b and c.

Its subcellular location is the cell membrane. Functionally, produces ATP from ADP in the presence of a proton gradient across the membrane. The chain is ATP synthase epsilon chain (atpC) from Mycoplasmopsis pulmonis (strain UAB CTIP) (Mycoplasma pulmonis).